Reading from the N-terminus, the 509-residue chain is UDP-N-acetylmuramoyl-L-alanyl-D-glutamate--2,6-diaminopimelate ligase (509 aa).

Ser-32 is a UDP-N-acetyl-alpha-D-muramoyl-L-alanyl-D-glutamate binding site. Residue 117–123 coordinates ATP; that stretch reads GTNGKTT. Residues 159–160, Ser-186, Gln-192, and Arg-194 each bind UDP-N-acetyl-alpha-D-muramoyl-L-alanyl-D-glutamate; that span reads TT. Lys-226 is modified (N6-carboxylysine). Meso-2,6-diaminopimelate contacts are provided by residues Arg-401, 425-428, Gly-476, and Glu-480; that span reads DNPR. The short motif at 425–428 is the Meso-diaminopimelate recognition motif element; sequence DNPR.

This sequence belongs to the MurCDEF family. MurE subfamily. Mg(2+) is required as a cofactor. Post-translationally, carboxylation is probably crucial for Mg(2+) binding and, consequently, for the gamma-phosphate positioning of ATP.

Its subcellular location is the cytoplasm. The catalysed reaction is UDP-N-acetyl-alpha-D-muramoyl-L-alanyl-D-glutamate + meso-2,6-diaminopimelate + ATP = UDP-N-acetyl-alpha-D-muramoyl-L-alanyl-gamma-D-glutamyl-meso-2,6-diaminopimelate + ADP + phosphate + H(+). It functions in the pathway cell wall biogenesis; peptidoglycan biosynthesis. In terms of biological role, catalyzes the addition of meso-diaminopimelic acid to the nucleotide precursor UDP-N-acetylmuramoyl-L-alanyl-D-glutamate (UMAG) in the biosynthesis of bacterial cell-wall peptidoglycan. This chain is UDP-N-acetylmuramoyl-L-alanyl-D-glutamate--2,6-diaminopimelate ligase, found in Prochlorococcus marinus (strain NATL1A).